The chain runs to 232 residues: Nucleoside diphosphate kinase 2, chloroplastic (232 aa).

The N-terminal 79 residues, 1-79, are a transit peptide targeting the chloroplast; it reads MGCLSVVGAS…TRIFLPHLVA (79 aa). ATP is bound by residues Lys92, Phe140, Arg168, Thr174, Arg185, and Asn195. His198 functions as the Pros-phosphohistidine intermediate in the catalytic mechanism.

This sequence belongs to the NDK family. Mg(2+) is required as a cofactor.

Its subcellular location is the plastid. It is found in the chloroplast. The catalysed reaction is a 2'-deoxyribonucleoside 5'-diphosphate + ATP = a 2'-deoxyribonucleoside 5'-triphosphate + ADP. The enzyme catalyses a ribonucleoside 5'-diphosphate + ATP = a ribonucleoside 5'-triphosphate + ADP. In terms of biological role, major role in the synthesis of nucleoside triphosphates other than ATP. The ATP gamma phosphate is transferred to the NDP beta phosphate via a ping-pong mechanism, using a phosphorylated active-site intermediate. The sequence is that of Nucleoside diphosphate kinase 2, chloroplastic from Nicotiana tabacum (Common tobacco).